A 58-amino-acid polypeptide reads, in one-letter code: Probable mRNA interferase HicA 2 (58 aa).

It belongs to the HicA mRNA interferase family. As to quaternary structure, probably forms a complex with the cognate antitoxin HicB 2 which inhibits the mRNA interferase activity.

In terms of biological role, toxic component of a type II toxin-antitoxin (TA) system. A probable translation-independent mRNA interferase. This is Probable mRNA interferase HicA 2 (hicA2) from Photorhabdus laumondii subsp. laumondii (strain DSM 15139 / CIP 105565 / TT01) (Photorhabdus luminescens subsp. laumondii).